Consider the following 434-residue polypeptide: Probable proline transporter 2 (434 aa).

Helical transmembrane passes span 26–46, 49–69, 106–126, 149–169, 171–191, 213–233, 251–271, 297–317, 339–359, 362–382, and 403–423; these read PWYQVGFVLTTGVNSAYVLGY, SVMVPLGWIGGTCGLILAAAI, LTWALQYVNLFMINTGFIILA, IALSGFVCALFAFGIPYLSAL, IWLGFSTFFSLIYITIAFVLS, IFTTIGAVANLVFAYNTGMLP, LWFQFTVGSLPLYAVTFMGYW, LSAFLQTVIALHIFASPMYEF, VGVRGGYLTVNTLVAAMLPFL, FMSLTGALSTFPLTFVLANHM, and VAGFSLLSIAAAVAALRLIMV.

This sequence belongs to the amino acid/polyamine transporter 2 family. Amino acid/auxin permease (AAAP) (TC 2.A.18.3) subfamily.

It localises to the cell membrane. Functionally, proline transporter that mediates proline transport across the plasma membrane. The chain is Probable proline transporter 2 from Oryza sativa subsp. japonica (Rice).